A 391-amino-acid polypeptide reads, in one-letter code: Alkanesulfonate monooxygenase (391 aa).

Belongs to the SsuD family.

The enzyme catalyses an alkanesulfonate + FMNH2 + O2 = an aldehyde + FMN + sulfite + H2O + 2 H(+). Catalyzes the desulfonation of aliphatic sulfonates. The sequence is that of Alkanesulfonate monooxygenase from Rhodopseudomonas palustris (strain ATCC BAA-98 / CGA009).